Reading from the N-terminus, the 360-residue chain is G-box-binding factor 2 (360 aa).

The span at 1 to 16 shows a compositional bias: polar residues; sequence MGSNEEGNPTNNSDKP. Disordered regions lie at residues 1 to 26 and 150 to 275; these read MGSNEEGNPTNNSDKPSQAAAPEQSN and KVGS…AETE. A compositionally biased stretch (low complexity) spans 164 to 184; that stretch reads SQSSENDGSSNGSDGNTTGGE. The span at 198–208 shows a compositional bias: polar residues; sequence TGERPSSQNSL. Basic and acidic residues predominate over residues 246-264; the sequence is NEKEVKREKRKQSNRESAR. The bZIP domain occupies 249–312; the sequence is EVKREKRKQS…EKLRLENEAI (64 aa). The segment at 251–270 is basic motif; the sequence is KREKRKQSNRESARRSRLRK. The leucine-zipper stretch occupies residues 277–312; that stretch reads LSVKVDALVAENMSLRSKLGQLNNESEKLRLENEAI. Residues 335-352 show a composition bias toward polar residues; sequence NSVSGSKTVQHQLLNASP. Residues 335–360 are disordered; it reads NSVSGSKTVQHQLLNASPITDPVAAS.

The protein belongs to the bZIP family. DNA-binding heterodimer. Interacts with GBF4. Interacts with BZIP16 and BZIP68. In terms of tissue distribution, found in both light and dark grown leaves.

The protein localises to the nucleus. In terms of biological role, binds to the G-box motif (5'-CCACGTGG-3') of the rbcS-1A gene promoter. G-box and G-box-like motifs are cis-acting elements defined in promoters of certain plant genes which are regulated by such diverse stimuli as light-induction or hormone control. GBF2 is found to bind asymmetrically to the G-box. The polypeptide is G-box-binding factor 2 (GBF2) (Arabidopsis thaliana (Mouse-ear cress)).